Here is a 647-residue protein sequence, read N- to C-terminus: Acetyl-coenzyme A synthetase (647 aa).

CoA contacts are provided by residues Arg-190–Lys-193, Thr-310, and Asn-334. ATP is bound by residues Gly-386–Pro-388, Asp-410–Thr-415, Asp-499, and Arg-514. Ser-522 contributes to the CoA binding site. Arg-525 is an ATP binding site. Positions 536, 538, and 541 each coordinate Mg(2+). Arg-583 provides a ligand contact to CoA. Lys-608 is modified (N6-acetyllysine).

The protein belongs to the ATP-dependent AMP-binding enzyme family. It depends on Mg(2+) as a cofactor. Acetylated. Deacetylation by the SIR2-homolog deacetylase activates the enzyme.

It catalyses the reaction acetate + ATP + CoA = acetyl-CoA + AMP + diphosphate. Functionally, catalyzes the conversion of acetate into acetyl-CoA (AcCoA), an essential intermediate at the junction of anabolic and catabolic pathways. AcsA undergoes a two-step reaction. In the first half reaction, AcsA combines acetate with ATP to form acetyl-adenylate (AcAMP) intermediate. In the second half reaction, it can then transfer the acetyl group from AcAMP to the sulfhydryl group of CoA, forming the product AcCoA. This Xanthomonas oryzae pv. oryzae (strain MAFF 311018) protein is Acetyl-coenzyme A synthetase.